The primary structure comprises 80 residues: Putative DNA-directed RNA polymerase subunit omega (80 aa).

Belongs to the RNA polymerase subunit omega family.

It localises to the plastid. Its subcellular location is the chloroplast. The enzyme catalyses RNA(n) + a ribonucleoside 5'-triphosphate = RNA(n+1) + diphosphate. May be involved in RNA polymerase activity. This is Putative DNA-directed RNA polymerase subunit omega from Gracilaria tenuistipitata var. liui (Red alga).